The chain runs to 282 residues: UDP-3-O-acyl-N-acetylglucosamine deacetylase (282 aa).

Zn(2+) contacts are provided by His81, His239, and Asp243. The active-site Proton donor is His266.

This sequence belongs to the LpxC family. The cofactor is Zn(2+).

The catalysed reaction is a UDP-3-O-[(3R)-3-hydroxyacyl]-N-acetyl-alpha-D-glucosamine + H2O = a UDP-3-O-[(3R)-3-hydroxyacyl]-alpha-D-glucosamine + acetate. The protein operates within glycolipid biosynthesis; lipid IV(A) biosynthesis; lipid IV(A) from (3R)-3-hydroxytetradecanoyl-[acyl-carrier-protein] and UDP-N-acetyl-alpha-D-glucosamine: step 2/6. Functionally, catalyzes the hydrolysis of UDP-3-O-myristoyl-N-acetylglucosamine to form UDP-3-O-myristoylglucosamine and acetate, the committed step in lipid A biosynthesis. This chain is UDP-3-O-acyl-N-acetylglucosamine deacetylase, found in Chlamydia pneumoniae (Chlamydophila pneumoniae).